We begin with the raw amino-acid sequence, 468 residues long: UDP-N-acetylmuramate--L-alanine ligase (468 aa).

112-118 (GTHGKTT) provides a ligand contact to ATP.

Belongs to the MurCDEF family.

Its subcellular location is the cytoplasm. The catalysed reaction is UDP-N-acetyl-alpha-D-muramate + L-alanine + ATP = UDP-N-acetyl-alpha-D-muramoyl-L-alanine + ADP + phosphate + H(+). It participates in cell wall biogenesis; peptidoglycan biosynthesis. Cell wall formation. In Bordetella pertussis (strain Tohama I / ATCC BAA-589 / NCTC 13251), this protein is UDP-N-acetylmuramate--L-alanine ligase.